Here is a 339-residue protein sequence, read N- to C-terminus: Anthranilate phosphoribosyltransferase (339 aa).

5-phospho-alpha-D-ribose 1-diphosphate contacts are provided by residues Gly-82, 85-86 (GD), 92-95 (NIST), 110-118 (KHGNRGISS), and Ser-122. Position 82 (Gly-82) interacts with anthranilate. Position 94 (Ser-94) interacts with Mg(2+). Asn-113 contacts anthranilate. Arg-168 serves as a coordination point for anthranilate. Mg(2+) contacts are provided by Asp-227 and Glu-228.

Belongs to the anthranilate phosphoribosyltransferase family. Homodimer. The cofactor is Mg(2+).

The catalysed reaction is N-(5-phospho-beta-D-ribosyl)anthranilate + diphosphate = 5-phospho-alpha-D-ribose 1-diphosphate + anthranilate. It participates in amino-acid biosynthesis; L-tryptophan biosynthesis; L-tryptophan from chorismate: step 2/5. In terms of biological role, catalyzes the transfer of the phosphoribosyl group of 5-phosphorylribose-1-pyrophosphate (PRPP) to anthranilate to yield N-(5'-phosphoribosyl)-anthranilate (PRA). This chain is Anthranilate phosphoribosyltransferase, found in Vesicomyosocius okutanii subsp. Calyptogena okutanii (strain HA).